The primary structure comprises 463 residues: SPARC-related modular calcium-binding protein 1 (463 aa).

Positions 1–25 (MLPARVRLLTPHLLLVLVQLSPAGG) are cleaved as a signal peptide. The 53-residue stretch at 36 to 88 (SDRDPPCNPHCPRTQPKPICASDGRSYESMCEYQRAKCRDPALAVVHRGRCKD) folds into the Kazal-like domain. Intrachain disulfides connect cysteine 42–cysteine 73, cysteine 46–cysteine 66, cysteine 55–cysteine 86, cysteine 94–cysteine 117, cysteine 128–cysteine 135, and cysteine 137–cysteine 157. The Thyroglobulin type-1 1 domain occupies 91–157 (QSKCRLERAQ…SSVQNKTPVC (67 aa)). The N-linked (GlcNAc...) asparagine glycan is linked to asparagine 224. The Thyroglobulin type-1 2 domain occupies 234–302 (VHSCDQERQS…TSTRYVMPSC (69 aa)). Disulfide bonds link cysteine 237–cysteine 261, cysteine 272–cysteine 279, and cysteine 281–cysteine 302. 2 EF-hand domains span residues 369 to 404 (LEER…VKKK) and 406 to 441 (KPKK…SKEG). Positions 382, 384, 386, 388, 393, 419, 421, 423, and 430 each coordinate Ca(2+). Residue asparagine 384 is glycosylated (N-linked (GlcNAc...) asparagine).

In terms of processing, glycosylated. As to expression, widely expressed in many tissues with a strongest signal in ovary.

It localises to the secreted. Its subcellular location is the extracellular space. The protein resides in the extracellular matrix. It is found in the basement membrane. In terms of biological role, probable regulator of osteoblast differentiation. Plays essential roles in both eye and limb development. The protein is SPARC-related modular calcium-binding protein 1 (Smoc1) of Mus musculus (Mouse).